A 341-amino-acid chain; its full sequence is Protein-glutamate methylesterase/protein-glutamine glutaminase 2 (341 aa).

A Response regulatory domain is found at 7–120; it reads KTLIVDDSLL…NRDLDSFFSE (114 aa). A 4-aspartylphosphate modification is found at Asp58. The CheB-type methylesterase domain maps to 155–341; sequence VIAIGASTGG…QALYKLINQL (187 aa). Residues Ser161, His187, and Asp283 contribute to the active site.

This sequence belongs to the CheB family. In terms of processing, phosphorylated by CheA. Phosphorylation of the N-terminal regulatory domain activates the methylesterase activity.

The protein localises to the cytoplasm. It catalyses the reaction [protein]-L-glutamate 5-O-methyl ester + H2O = L-glutamyl-[protein] + methanol + H(+). The catalysed reaction is L-glutaminyl-[protein] + H2O = L-glutamyl-[protein] + NH4(+). Its function is as follows. Involved in chemotaxis. Part of a chemotaxis signal transduction system that modulates chemotaxis in response to various stimuli. Catalyzes the demethylation of specific methylglutamate residues introduced into the chemoreceptors (methyl-accepting chemotaxis proteins or MCP) by CheR. Also mediates the irreversible deamidation of specific glutamine residues to glutamic acid. This is Protein-glutamate methylesterase/protein-glutamine glutaminase 2 from Syntrophomonas wolfei subsp. wolfei (strain DSM 2245B / Goettingen).